The chain runs to 126 residues: uncharacterized protein (126 aa).

Residues 8–106 (ISVEATLEVI…WGANHINRVY (99 aa)) enclose the HTH hxlR-type domain.

This is an uncharacterized protein from Bacillus subtilis (strain 168).